The primary structure comprises 338 residues: Heat-inducible transcription repressor HrcA (338 aa).

It belongs to the HrcA family.

Its function is as follows. Negative regulator of class I heat shock genes (grpE-dnaK-dnaJ and groELS operons). Prevents heat-shock induction of these operons. The sequence is that of Heat-inducible transcription repressor HrcA from Streptomyces albus G.